Consider the following 353-residue polypeptide: Inactive ADP-ribosyltransferase ARH2 (353 aa).

The residue at position 27 (serine 27) is a Phosphoserine.

It belongs to the ADP-ribosylglycohydrolase family. As to expression, expressed in the embryonic heart at E11.5.

The protein localises to the cytoplasm. Its subcellular location is the myofibril. It is found in the sarcomere. Functionally, required for myofibril assembly and outgrowth of the cardiac chambers in the developing heart. Appears to be catalytically inactive, showing no activity against O-acetyl-ADP-ribose. This Mus musculus (Mouse) protein is Inactive ADP-ribosyltransferase ARH2 (Adprhl1).